A 135-amino-acid chain; its full sequence is Flagellar assembly factor FliW 2 (135 aa).

The protein belongs to the FliW family. As to quaternary structure, interacts with translational regulator CsrA and flagellin(s).

Its subcellular location is the cytoplasm. Its function is as follows. Acts as an anti-CsrA protein, binds CsrA and prevents it from repressing translation of its target genes, one of which is flagellin. Binds to flagellin and participates in the assembly of the flagellum. This Helicobacter acinonychis (strain Sheeba) protein is Flagellar assembly factor FliW 2.